Reading from the N-terminus, the 70-residue chain is MSSDKKQGFEASLERLEALVGELERGELPLEEALAAYEEGMKLARLCQKRLDSAEKRIEKIATPSGDEEA.

It belongs to the XseB family. Heterooligomer composed of large and small subunits.

It is found in the cytoplasm. It catalyses the reaction Exonucleolytic cleavage in either 5'- to 3'- or 3'- to 5'-direction to yield nucleoside 5'-phosphates.. Functionally, bidirectionally degrades single-stranded DNA into large acid-insoluble oligonucleotides, which are then degraded further into small acid-soluble oligonucleotides. This Magnetococcus marinus (strain ATCC BAA-1437 / JCM 17883 / MC-1) protein is Exodeoxyribonuclease 7 small subunit.